An 83-amino-acid chain; its full sequence is Cytochrome b559 subunit alpha (83 aa).

A helical membrane pass occupies residues 21-35; that stretch reads VIHSITIPSLFIAGW. Position 23 (histidine 23) interacts with heme.

The protein belongs to the PsbE/PsbF family. Heterodimer of an alpha subunit and a beta subunit. PSII is composed of 1 copy each of membrane proteins PsbA, PsbB, PsbC, PsbD, PsbE, PsbF, PsbH, PsbI, PsbJ, PsbK, PsbL, PsbM, PsbT, PsbX, PsbY, PsbZ, Psb30/Ycf12, at least 3 peripheral proteins of the oxygen-evolving complex and a large number of cofactors. It forms dimeric complexes. Heme b is required as a cofactor.

The protein resides in the plastid. Its subcellular location is the chloroplast thylakoid membrane. Its function is as follows. This b-type cytochrome is tightly associated with the reaction center of photosystem II (PSII). PSII is a light-driven water:plastoquinone oxidoreductase that uses light energy to abstract electrons from H(2)O, generating O(2) and a proton gradient subsequently used for ATP formation. It consists of a core antenna complex that captures photons, and an electron transfer chain that converts photonic excitation into a charge separation. The polypeptide is Cytochrome b559 subunit alpha (Mesembryanthemum crystallinum (Common ice plant)).